Here is a 160-residue protein sequence, read N- to C-terminus: Transcriptional repressor NrdR (160 aa).

Over residues 1 to 11 the composition is skewed to polar residues; sequence MRCPSCNSLDT. The tract at residues 1-20 is disordered; the sequence is MRCPSCNSLDTQVKDSRPTE. The segment at 3–34 is a zinc-finger region; it reads CPSCNSLDTQVKDSRPTEDSAVIRRRRVCMAC. Residues 49–139 form the ATP-cone domain; it reads LTVIKRNGRR…VYRNFREAKD (91 aa).

Belongs to the NrdR family. Zn(2+) is required as a cofactor.

Functionally, negatively regulates transcription of bacterial ribonucleotide reductase nrd genes and operons by binding to NrdR-boxes. This chain is Transcriptional repressor NrdR, found in Nitrobacter hamburgensis (strain DSM 10229 / NCIMB 13809 / X14).